The sequence spans 331 residues: uncharacterized protein (331 aa).

Belongs to the IIV-6 335L family.

This is an uncharacterized protein from Invertebrate iridescent virus 6 (IIV-6).